A 279-amino-acid chain; its full sequence is Bifunctional protein FolD (279 aa).

NADP(+)-binding positions include 162–164 (GRS), Ser187, and Ile228.

This sequence belongs to the tetrahydrofolate dehydrogenase/cyclohydrolase family. In terms of assembly, homodimer.

It catalyses the reaction (6R)-5,10-methylene-5,6,7,8-tetrahydrofolate + NADP(+) = (6R)-5,10-methenyltetrahydrofolate + NADPH. The enzyme catalyses (6R)-5,10-methenyltetrahydrofolate + H2O = (6R)-10-formyltetrahydrofolate + H(+). It participates in one-carbon metabolism; tetrahydrofolate interconversion. Functionally, catalyzes the oxidation of 5,10-methylenetetrahydrofolate to 5,10-methenyltetrahydrofolate and then the hydrolysis of 5,10-methenyltetrahydrofolate to 10-formyltetrahydrofolate. This Acidiphilium cryptum (strain JF-5) protein is Bifunctional protein FolD.